The primary structure comprises 318 residues: Ribosome biogenesis protein RLP7 (318 aa).

2 disordered regions span residues 1-49 and 101-121; these read MSQP…NRFV and AGSKATSESELQDVDEEDEED. A compositionally biased stretch (basic and acidic residues) spans 19 to 40; it reads ADRTRLEKQELAKKRKEQEEKQ. Residues 110-121 are compositionally biased toward acidic residues; sequence ELQDVDEEDEED.

This sequence belongs to the universal ribosomal protein uL30 family.

It localises to the nucleus. It is found in the nucleolus. In terms of biological role, involved in the biogenesis of the 60S ribosomal subunit. May act as a specificity factor that binds precursor rRNAs and tethers the enzymes that carry out the early 5' to 3' exonucleolytic reactions that generate the mature rRNAs. This chain is Ribosome biogenesis protein RLP7 (RLP7), found in Kluyveromyces lactis (strain ATCC 8585 / CBS 2359 / DSM 70799 / NBRC 1267 / NRRL Y-1140 / WM37) (Yeast).